The primary structure comprises 368 residues: Leu/Ile/Val-binding protein homolog 3 (368 aa).

A signal peptide spans M1–A23.

It belongs to the leucine-binding protein family.

In terms of biological role, component of an amino-acid transport system. The protein is Leu/Ile/Val-binding protein homolog 3 of Brucella melitensis biotype 1 (strain ATCC 23456 / CCUG 17765 / NCTC 10094 / 16M).